The chain runs to 200 residues: MTSKIFSPKISAVIESLRKLPTIGKKSSQRLALYLLDKSPETAIAIANSLLDATANIKKCVYCQALTEDDVCNICSNTNRDDTKLCIIESMLDMIAIEEAGIYRGKYFVLNGRISPLDGIGPSELKLDILQQIIADRKIDEVILAISPTVEGETTAHFISQMIAKDIKISRIGFGVPFGGELEYLDQQTLLHAFNARTNI.

A C4-type zinc finger spans residues 60–75 (CVYCQALTEDDVCNIC). A Toprim domain is found at 83–177 (TKLCIIESML…KISRIGFGVP (95 aa)).

The protein belongs to the RecR family.

Its function is as follows. May play a role in DNA repair. It seems to be involved in an RecBC-independent recombinational process of DNA repair. It may act with RecF and RecO. The polypeptide is Recombination protein RecR (Francisella tularensis subsp. tularensis (strain WY96-3418)).